The primary structure comprises 300 residues: Bis(5'-nucleosyl)-tetraphosphatase, symmetrical (300 aa).

This sequence belongs to the Ap4A hydrolase family.

The catalysed reaction is P(1),P(4)-bis(5'-adenosyl) tetraphosphate + H2O = 2 ADP + 2 H(+). Functionally, hydrolyzes diadenosine 5',5'''-P1,P4-tetraphosphate to yield ADP. The protein is Bis(5'-nucleosyl)-tetraphosphatase, symmetrical of Pseudomonas syringae pv. tomato (strain ATCC BAA-871 / DC3000).